The sequence spans 428 residues: Glutamate-1-semialdehyde 2,1-aminomutase (428 aa).

An N6-(pyridoxal phosphate)lysine modification is found at lysine 267.

It belongs to the class-III pyridoxal-phosphate-dependent aminotransferase family. HemL subfamily. Homodimer. Pyridoxal 5'-phosphate is required as a cofactor.

It localises to the cytoplasm. It carries out the reaction (S)-4-amino-5-oxopentanoate = 5-aminolevulinate. It participates in porphyrin-containing compound metabolism; protoporphyrin-IX biosynthesis; 5-aminolevulinate from L-glutamyl-tRNA(Glu): step 2/2. The sequence is that of Glutamate-1-semialdehyde 2,1-aminomutase from Pelobacter propionicus (strain DSM 2379 / NBRC 103807 / OttBd1).